The chain runs to 217 residues: Putative thymidylate synthase (217 aa).

Cysteine 139 is an active-site residue.

This sequence belongs to the thymidylate synthase family. Archaeal-type ThyA subfamily. Monomer.

It localises to the cytoplasm. Its pathway is pyrimidine metabolism; dTTP biosynthesis. Its function is as follows. May catalyze the biosynthesis of dTMP using an unknown cosubstrate. The chain is Putative thymidylate synthase from Methanosarcina barkeri (strain Fusaro / DSM 804).